The following is a 525-amino-acid chain: ATP synthase subunit alpha (525 aa).

169-176 (GDRQTGKT) is an ATP binding site.

It belongs to the ATPase alpha/beta chains family. F-type ATPases have 2 components, CF(1) - the catalytic core - and CF(0) - the membrane proton channel. CF(1) has five subunits: alpha(3), beta(3), gamma(1), delta(1), epsilon(1). CF(0) has three main subunits: a(1), b(2) and c(9-12). The alpha and beta chains form an alternating ring which encloses part of the gamma chain. CF(1) is attached to CF(0) by a central stalk formed by the gamma and epsilon chains, while a peripheral stalk is formed by the delta and b chains.

The protein resides in the cell membrane. It catalyses the reaction ATP + H2O + 4 H(+)(in) = ADP + phosphate + 5 H(+)(out). In terms of biological role, produces ATP from ADP in the presence of a proton gradient across the membrane. The alpha chain is a regulatory subunit. The sequence is that of ATP synthase subunit alpha from Mesoplasma florum (strain ATCC 33453 / NBRC 100688 / NCTC 11704 / L1) (Acholeplasma florum).